A 309-amino-acid polypeptide reads, in one-letter code: Porphobilinogen deaminase (309 aa).

Cys-242 carries the S-(dipyrrolylmethanemethyl)cysteine modification.

This sequence belongs to the HMBS family. In terms of assembly, monomer. It depends on dipyrromethane as a cofactor.

It catalyses the reaction 4 porphobilinogen + H2O = hydroxymethylbilane + 4 NH4(+). It participates in porphyrin-containing compound metabolism; protoporphyrin-IX biosynthesis; coproporphyrinogen-III from 5-aminolevulinate: step 2/4. Tetrapolymerization of the monopyrrole PBG into the hydroxymethylbilane pre-uroporphyrinogen in several discrete steps. This is Porphobilinogen deaminase from Syntrophobacter fumaroxidans (strain DSM 10017 / MPOB).